A 248-amino-acid polypeptide reads, in one-letter code: Triosephosphate isomerase (248 aa).

Substrate is bound at residue 9–11 (NWK). The Electrophile role is filled by H92. The active-site Proton acceptor is E164. Substrate contacts are provided by residues G170, S210, and 231–232 (GG).

This sequence belongs to the triosephosphate isomerase family. Homodimer.

It is found in the cytoplasm. It carries out the reaction D-glyceraldehyde 3-phosphate = dihydroxyacetone phosphate. It participates in carbohydrate biosynthesis; gluconeogenesis. Its pathway is carbohydrate degradation; glycolysis; D-glyceraldehyde 3-phosphate from glycerone phosphate: step 1/1. Involved in the gluconeogenesis. Catalyzes stereospecifically the conversion of dihydroxyacetone phosphate (DHAP) to D-glyceraldehyde-3-phosphate (G3P). The polypeptide is Triosephosphate isomerase (Mycoplasma capricolum subsp. capricolum (strain California kid / ATCC 27343 / NCTC 10154)).